Consider the following 211-residue polypeptide: Uridine kinase (211 aa).

12–19 (GGSGSGKT) contributes to the ATP binding site.

Belongs to the uridine kinase family.

The protein localises to the cytoplasm. The catalysed reaction is uridine + ATP = UMP + ADP + H(+). It catalyses the reaction cytidine + ATP = CMP + ADP + H(+). Its pathway is pyrimidine metabolism; CTP biosynthesis via salvage pathway; CTP from cytidine: step 1/3. The protein operates within pyrimidine metabolism; UMP biosynthesis via salvage pathway; UMP from uridine: step 1/1. The sequence is that of Uridine kinase from Bacillus licheniformis (strain ATCC 14580 / DSM 13 / JCM 2505 / CCUG 7422 / NBRC 12200 / NCIMB 9375 / NCTC 10341 / NRRL NRS-1264 / Gibson 46).